Consider the following 546-residue polypeptide: 3-(3-hydroxy-phenyl)propionate/3-hydroxycinnamic acid hydroxylase 2 (546 aa).

FAD is bound by residues 10–39 and 278–288; these read SVAI…VVER and FVAGRIALVGD.

It belongs to the PheA/TfdB FAD monooxygenase family. FAD serves as cofactor.

The catalysed reaction is 3-(3-hydroxyphenyl)propanoate + NADH + O2 + H(+) = 3-(2,3-dihydroxyphenyl)propanoate + NAD(+) + H2O. It carries out the reaction (2E)-3-(3-hydroxyphenyl)prop-2-enoate + NADH + O2 + H(+) = (2E)-3-(2,3-dihydroxyphenyl)prop-2-enoate + NAD(+) + H2O. Its pathway is aromatic compound metabolism; 3-phenylpropanoate degradation. Functionally, catalyzes the insertion of one atom of molecular oxygen into position 2 of the phenyl ring of 3-(3-hydroxyphenyl)propionate (3-HPP) and hydroxycinnamic acid (3HCI). This is 3-(3-hydroxy-phenyl)propionate/3-hydroxycinnamic acid hydroxylase 2 from Burkholderia vietnamiensis (strain G4 / LMG 22486) (Burkholderia cepacia (strain R1808)).